Reading from the N-terminus, the 275-residue chain is F-box only protein 50 (275 aa).

A disordered region spans residues 1-67; sequence MEEVREGHAL…LPEPAQPSEA (67 aa). The span at 26–62 shows a compositional bias: pro residues; that stretch reads PPSPRSPSPPPSPPPLPSPPSLPSPAAPEAPELPEPA. Phosphoserine occurs at positions 31, 37, and 49. The region spanning 95–273 is the FBA domain; that stretch reads LLLRRPLYRN…VTDSSVSVQL (179 aa).

In terms of tissue distribution, expressed in the esophagus, oral cavity, skin, tongue and reproductive organs.

The protein resides in the cytoplasm. Its function is as follows. Promotes cell proliferation. In Homo sapiens (Human), this protein is F-box only protein 50 (NCCRP1).